The sequence spans 254 residues: Cytokine-inducible SH2-containing protein (254 aa).

The SH2 domain maps to 82-188; the sequence is WYWGSITASE…ATTPALPTPK (107 aa). The tract at residues 171 to 195 is disordered; sequence TRSDSPDLATTPALPTPKEDAPGDP. In terms of domain architecture, SOCS box spans 205 to 253; it reads KLVQPFVRRSSTRSLQHLCRLVINRLVVDVDCLPLPRRMADYLRQYPFQ.

In terms of assembly, stably associated with the tyrosine-phosphorylated IL3 receptor beta chain and tyrosine-phosphorylated EPO receptor (EPOR).

The protein operates within protein modification; protein ubiquitination. Its function is as follows. SOCS family proteins form part of a classical negative feedback system that regulates cytokine signal transduction. CIS is involved in the negative regulation of cytokines that signal through the JAK-STAT5 pathway such as erythropoietin, prolactin and interleukin 3 (IL3) receptor. Inhibits STAT5 trans-activation by suppressing its tyrosine phosphorylation. May be a substrate recognition component of a SCF-like ECS (Elongin BC-CUL2/5-SOCS-box protein) E3 ubiquitin-protein ligase complex which mediates the ubiquitination and subsequent proteasomal degradation of target proteins. The protein is Cytokine-inducible SH2-containing protein (CISH) of Bos taurus (Bovine).